A 180-amino-acid chain; its full sequence is ATP synthase subunit b, plastid (180 aa).

Residues 27-49 (LVTTLINIAVVLSLLIVFGKGFL) traverse the membrane as a helical segment.

This sequence belongs to the ATPase B chain family. F-type ATPases have 2 components, F(1) - the catalytic core - and F(0) - the membrane proton channel. F(1) has five subunits: alpha(3), beta(3), gamma(1), delta(1), epsilon(1). F(0) has four main subunits: a(1), b(1), b'(1) and c(10-14). The alpha and beta chains form an alternating ring which encloses part of the gamma chain. F(1) is attached to F(0) by a central stalk formed by the gamma and epsilon chains, while a peripheral stalk is formed by the delta, b and b' chains.

The protein resides in the plastid membrane. F(1)F(0) ATP synthase produces ATP from ADP in the presence of a proton or sodium gradient. F-type ATPases consist of two structural domains, F(1) containing the extramembraneous catalytic core and F(0) containing the membrane proton channel, linked together by a central stalk and a peripheral stalk. During catalysis, ATP synthesis in the catalytic domain of F(1) is coupled via a rotary mechanism of the central stalk subunits to proton translocation. Functionally, component of the F(0) channel, it forms part of the peripheral stalk, linking F(1) to F(0). This chain is ATP synthase subunit b, plastid, found in Cuscuta gronovii (Common dodder).